The chain runs to 528 residues: ATP synthase F(1) complex catalytic subunit beta, mitochondrial (528 aa).

A mitochondrion-targeting transit peptide spans 1 to 46 (MLGLVGRVVAASASGALRGLSPSAPLPQAQLLLRAAPAALQPARDY). S106 carries O-linked (GlcNAc) serine glycosylation. Residues K124 and K161 each carry the N6-acetyllysine; alternate modification. N6-succinyllysine; alternate occurs at positions 124 and 161. Residue K198 is modified to N6-acetyllysine. 6 residues coordinate ADP: G209, V210, G211, K212, T213, and V214. G209 serves as a coordination point for ATP. The phosphate site is built by G209, V210, G211, K212, and T213. 4 residues coordinate ATP: G211, K212, T213, and V214. Residue T213 coordinates Mg(2+). E238 lines the Mg(2+) pocket. R239 contributes to the ATP binding site. Residues K259 and K264 each carry the N6-acetyllysine; alternate modification. K259 and K264 each carry N6-succinyllysine; alternate. Position 312 is a phosphothreonine (T312). Residue S415 is modified to Phosphoserine. An N6-acetyllysine modification is found at K426. S433 carries the phosphoserine modification. Residues K480 and K485 each carry the N6-acetyllysine modification. K522 is modified (N6-acetyllysine; alternate). Residue K522 is modified to N6-succinyllysine; alternate.

The protein belongs to the ATPase alpha/beta chains family. In terms of assembly, homotrimer. Component of the ATP synthase complex composed at least of ATP5F1A/subunit alpha, ATP5F1B/subunit beta, ATP5MC1/subunit c (homooctomer), MT-ATP6/subunit a, MT-ATP8/subunit 8, ATP5ME/subunit e, ATP5MF/subunit f, ATP5MG/subunit g, ATP5MK/subunit k, ATP5MJ/subunit j, ATP5F1C/subunit gamma, ATP5F1D/subunit delta, ATP5F1E/subunit epsilon, ATP5PF/subunit F6, ATP5PB/subunit b, ATP5PD/subunit d, ATP5PO/subunit OSCP. ATP synthase complex consists of a soluble F(1) head domain (subunits alpha(3) and beta(3)) - the catalytic core - and a membrane F(0) domain - the membrane proton channel (subunits c, a, 8, e, f, g, k and j). These two domains are linked by a central stalk (subunits gamma, delta, and epsilon) rotating inside the F1 region and a stationary peripheral stalk (subunits F6, b, d, and OSCP). Interacts with PPIF. Interacts with BCL2L1 isoform BCL-X(L); the interaction mediates the association of BCL2L1 isoform BCL-X(L) with the mitochondrial membrane F(1)F(0) ATP synthase and enhances neurons metabolic efficiency. Interacts with CLN5 and PPT1. Interacts with S100A1; this interaction increases F1-ATPase activity. Interacts with MTLN. Interacts with TTC5/STRAP; the interaction results in decreased mitochondrial ATP production.

Its subcellular location is the mitochondrion inner membrane. The catalysed reaction is ATP + H2O + 4 H(+)(in) = ADP + phosphate + 5 H(+)(out). Catalytic subunit beta, of the mitochondrial membrane ATP synthase complex (F(1)F(0) ATP synthase or Complex V) that produces ATP from ADP in the presence of a proton gradient across the membrane which is generated by electron transport complexes of the respiratory chain. ATP synthase complex consist of a soluble F(1) head domain - the catalytic core - and a membrane F(1) domain - the membrane proton channel. These two domains are linked by a central stalk rotating inside the F(1) region and a stationary peripheral stalk. During catalysis, ATP synthesis in the catalytic domain of F(1) is coupled via a rotary mechanism of the central stalk subunits to proton translocation. In vivo, can only synthesize ATP although its ATP hydrolase activity can be activated artificially in vitro. With the subunit alpha (ATP5F1A), forms the catalytic core in the F(1) domain. The polypeptide is ATP synthase F(1) complex catalytic subunit beta, mitochondrial (Bos taurus (Bovine)).